A 310-amino-acid polypeptide reads, in one-letter code: Olfactory receptor 1496 (310 aa).

The Extracellular segment spans residues 1-23; it reads MNNQTFITQFLLLGLPIPEEHQH. The N-linked (GlcNAc...) asparagine glycan is linked to asparagine 3. Residues 24–48 traverse the membrane as a helical segment; the sequence is LFYALFLVMYLTTILGNLLIIVLVQ. Residues 49 to 55 are Cytoplasmic-facing; it reads LDSQLHT. A helical membrane pass occupies residues 56 to 77; it reads PMYLFLSNLSFSDLCFSSVTMP. Topologically, residues 78–98 are extracellular; the sequence is KLLQNMRSQDTSIPYGGCLAQ. An intrachain disulfide couples cysteine 95 to cysteine 187. A helical membrane pass occupies residues 99–118; the sequence is TYFFMVFGDMESFLLVAMAY. The Cytoplasmic segment spans residues 119 to 137; sequence DRYVAICFPLHYTSIMSPK. A helical membrane pass occupies residues 138–156; that stretch reads LCTCLVLLLWMLTTSHAMM. Residues 157 to 194 are Extracellular-facing; it reads HTLLAARLSFCENNVVLNFFCDLFVLLKLACSDTYINE. The helical transmembrane segment at 195 to 217 threads the bilayer; it reads LMIFIMSTLLIIIPFFLIVMSYA. Over 218–234 the chain is Cytoplasmic; it reads RIISSILKVPSTQGICK. A helical membrane pass occupies residues 235-258; it reads VFSTCGSHLSVVSLFYGTIIGLYL. Over 259 to 270 the chain is Extracellular; it reads CPAGNNSTVKEM. A helical membrane pass occupies residues 271–290; that stretch reads VMAMMYTVVTPMLNPFIYSL. At 291-310 the chain is on the cytoplasmic side; sequence RNRDMKRALIRVICSMKITL.

This sequence belongs to the G-protein coupled receptor 1 family. As to expression, olfactory epithelium.

It is found in the cell membrane. In terms of biological role, odorant receptor. This is Olfactory receptor 1496 (Olr1496) from Rattus norvegicus (Rat).